The primary structure comprises 807 residues: Glycerol-3-phosphate acyltransferase (807 aa).

The HXXXXD motif motif lies at 308 to 313 (CHRSHM).

This sequence belongs to the GPAT/DAPAT family.

The protein localises to the cell inner membrane. The enzyme catalyses sn-glycerol 3-phosphate + an acyl-CoA = a 1-acyl-sn-glycero-3-phosphate + CoA. Its pathway is phospholipid metabolism; CDP-diacylglycerol biosynthesis; CDP-diacylglycerol from sn-glycerol 3-phosphate: step 1/3. The protein is Glycerol-3-phosphate acyltransferase of Shewanella sp. (strain MR-4).